Reading from the N-terminus, the 528-residue chain is MPLTMSQAFIGNFLGNSPKWYKIAILSFLIINPILFFYVSPFVAGWVLVLEFIFTLAMALKCYPLQPGGLLAIEAVAIGMTSANQVLHEIEANLEVLLLLVFMVAGIYFMKQLLLFAFTKIITKVRSKILVSLMFCLTSAFLSAFLDALTVIAVIIAVAVGFYAIYHKVASGKDFSAVHDHTSESNTQLNNSELESFRGFLRNLLMHAGVGTALGGVCTMVGEPQNLIIAAQANWQFGEFVVRMSPVTVPVLIAGILTCLLVEKFRIFGYGAKLPDAVHKILCDYAAHEDAHRTNKDKMKLVIQVLVGVWLIAGLALHLASVGLVGLSVIILTTAFNGITDEHALGKAFEEALPFTALLAVFFAVVAVIIDQHLFAPVIQWALSYEGNTQLVIFYIANGLLSMVSDNVFVGTVYINEVKAALIDGQITRDQFDLLAVAINTGTNLPSVATPNGQAAFLFLLTSALAPLIRLSYGRMVWMALPYTIVLSVVGVLAIETGFLEQATQYFYDSHMIIHHSAKDVIAPLTSH.

A run of 11 helical transmembrane segments spans residues 10-30 (IGNFLGNSPKWYKIAILSFLI), 63-83 (YPLQPGGLLAIEAVAIGMTSA), 96-116 (VLLLLVFMVAGIYFMKQLLLF), 131-165 (VSLMFCLTSAFLSAFLDALTVIAVIIAVAVGFYAI), 204-224 (LLMHAGVGTALGGVCTMVGEP), 240-260 (FVVRMSPVTVPVLIAGILTCL), 305-325 (VLVGVWLIAGLALHLASVGLV), 359-379 (LAVFFAVVAVIIDQHLFAPVI), 391-411 (LVIFYIANGLLSMVSDNVFVG), 449-469 (ATPNGQAAFLFLLTSALAPLI), and 476-496 (MVWMALPYTIVLSVVGVLAIE).

Belongs to the NhaB Na(+)/H(+) (TC 2.A.34) antiporter family.

The protein localises to the cell inner membrane. The catalysed reaction is 2 Na(+)(in) + 3 H(+)(out) = 2 Na(+)(out) + 3 H(+)(in). In terms of biological role, na(+)/H(+) antiporter that extrudes sodium in exchange for external protons. The polypeptide is Na(+)/H(+) antiporter NhaB (Shewanella sp. (strain W3-18-1)).